We begin with the raw amino-acid sequence, 268 residues long: Ubiquinone biosynthesis protein COQ4 homolog, mitochondrial (268 aa).

The N-terminal 25 residues, M1–S25, are a transit peptide targeting the mitochondrion. Residues H171, D172, H175, and E187 each coordinate Zn(2+).

It belongs to the COQ4 family. Component of a multi-subunit COQ enzyme complex. The cofactor is Zn(2+).

It is found in the mitochondrion inner membrane. It catalyses the reaction a 4-hydroxy-3-methoxy-5-(all-trans-polyprenyl)benzoate + H(+) = a 2-methoxy-6-(all-trans-polyprenyl)phenol + CO2. Its pathway is cofactor biosynthesis; ubiquinone biosynthesis. In terms of biological role, lyase that catalyzes the C1-decarboxylation of 4-hydroxy-3-methoxy-5-(all-trans-polyprenyl)benzoic acid into 2-methoxy-6-(all-trans-polyprenyl)phenol during ubiquinone biosynthesis. The chain is Ubiquinone biosynthesis protein COQ4 homolog, mitochondrial from Drosophila simulans (Fruit fly).